The following is a 381-amino-acid chain: uncharacterized protein (381 aa).

A helical transmembrane segment spans residues 3-23; the sequence is GAVAGLVFLAVLVIFAIIVVA.

This sequence belongs to the band 7/mec-2 family.

It localises to the membrane. This is an uncharacterized protein from Mycobacterium bovis (strain ATCC BAA-935 / AF2122/97).